A 155-amino-acid chain; its full sequence is V-type proton ATPase 16 kDa proteolipid subunit c (155 aa).

Residues 1 to 10 (MSEAKSGPEY) are Lumenal-facing. The chain crosses the membrane as a helical span at residues 11–33 (ASFFAVMGASAAMVFSALGAAYG). The Cytoplasmic portion of the chain corresponds to 34–55 (TAKSGTGIAAMSVMRPEMIMKS). The chain crosses the membrane as a helical span at residues 56-76 (IIPVVMAGIIAIYGLVVAVLI). Over 77-92 (ANSLNDGISLYRSFLQ) the chain is Lumenal. Residues 93 to 114 (LGAGLSVGLSGLAAGFAIGIVG) form a helical membrane-spanning segment. Over 115 to 131 (DAGVRGTAQQPRLFVGM) the chain is Cytoplasmic. Residues 132–152 (ILILIFAEVLGLYGLIVALIL) traverse the membrane as a helical segment. Over 153-155 (STK) the chain is Lumenal.

Belongs to the V-ATPase proteolipid subunit family. As to quaternary structure, V-ATPase is a heteromultimeric enzyme made up of two complexes: the ATP-hydrolytic V1 complex and the proton translocation V0 complex. The V1 complex consists of three catalytic AB heterodimers that form a heterohexamer, three peripheral stalks each consisting of EG heterodimers, one central rotor including subunits D and F, and the regulatory subunits C and H. The proton translocation complex V0 consists of the proton transport subunit a, a ring of proteolipid subunits c9c'', rotary subunit d, subunits e and f, and the accessory subunits ATP6AP1/Ac45 and ATP6AP2/PRR. Interacts with the V0 complex V-ATPase subunit a4 ATP6V0A4. Interacts with LASS2. Interacts with RNF182; this interaction leads to ubiquitination and degradation via the proteasome pathway. In terms of processing, ubiquitinated by RNF182, leading to its degradation via the ubiquitin-proteasome pathway.

It localises to the cytoplasmic vesicle. The protein localises to the clathrin-coated vesicle membrane. Its subcellular location is the secretory vesicle. It is found in the synaptic vesicle membrane. Its function is as follows. Proton-conducting pore forming subunit of the V0 complex of vacuolar(H+)-ATPase (V-ATPase), a multisubunit enzyme composed of a peripheral complex (V1) that hydrolyzes ATP and a membrane integral complex (V0) that translocates protons. V-ATPase is responsible for acidifying and maintaining the pH of intracellular compartments and in some cell types, is targeted to the plasma membrane, where it is responsible for acidifying the extracellular environment. This Ovis aries (Sheep) protein is V-type proton ATPase 16 kDa proteolipid subunit c (ATP6V0C).